An 861-amino-acid polypeptide reads, in one-letter code: ToMV resistance protein Tm-2(GCR236) (861 aa).

Positions 63-83 form a coiled coil; sequence VKNLLKDIQELAGDVEDLLDD. Residues 162–388 form the NB-ARC domain; sequence DDFNMLQAKL…LESMGHKVQD (227 aa). ATP is bound at residue 185–192; it reads GMPGLGKT. LRR repeat units follow at residues 225–248, 305–327, 388–411, 449–472, 510–536, 585–608, 609–631, 652–680, 689–710, 712–735, 736–758, 784–810, and 811–835; these read LDIA…NLRS, LHAL…IFNF, DGCA…CFLY, LAED…TYNG, VARL…KLEK, MTCL…IVKL, TRLE…VWES, ISSF…FFEP, LRKL…IFSP, LKAL…LSSY, PHIA…SFPP, LRKL…GYSF, and PQLE…DVSM.

This sequence belongs to the disease resistance NB-LRR family. As to quaternary structure, (Microbial infection) Interacts with tobamoviruses mouvement protein at the plasma membrane; this interaction triggers defense responses leading to programmed cell death. Binds to HSP90 proteins; this interaction seems required for defense responses toward tobamoviruses.

It is found in the cell membrane. Inhibitor of viral mouvements which confers resistance to some tobamoviruses including tomato mosaic virus (ToMV) (e.g. isolates L, W3 and SL-1) and tobacco mosaic virus (TMV), but not to resistance-breaking isolates (e.g. B7, LT1, LII, Ltbl, ToMV2, and ToMV1-2) ToMV and tomato brown rugose fruit virus (ToBRFV). Elicits a hypersensitive reaction in response to avirulent (Avr) movement proteins from resistance inducing tobamoviruses (e.g. ToMV and TMV) strains, thus leading to programmed cell death. The polypeptide is ToMV resistance protein Tm-2(GCR236) (Solanum lycopersicum (Tomato)).